The primary structure comprises 599 residues: Aspartate--tRNA(Asp/Asn) ligase (599 aa).

Glu174 serves as a coordination point for L-aspartate. Residues 198–201 (QLFK) form an aspartate region. Residue Arg220 coordinates L-aspartate. ATP is bound by residues 220–222 (RDE) and Gln229. His457 contributes to the L-aspartate binding site. An ATP-binding site is contributed by Glu491. Position 498 (Arg498) interacts with L-aspartate. An ATP-binding site is contributed by 543–546 (GLDR).

Belongs to the class-II aminoacyl-tRNA synthetase family. Type 1 subfamily. In terms of assembly, homodimer.

It localises to the cytoplasm. The catalysed reaction is tRNA(Asx) + L-aspartate + ATP = L-aspartyl-tRNA(Asx) + AMP + diphosphate. Its function is as follows. Aspartyl-tRNA synthetase with relaxed tRNA specificity since it is able to aspartylate not only its cognate tRNA(Asp) but also tRNA(Asn). Reaction proceeds in two steps: L-aspartate is first activated by ATP to form Asp-AMP and then transferred to the acceptor end of tRNA(Asp/Asn). In Paraburkholderia phymatum (strain DSM 17167 / CIP 108236 / LMG 21445 / STM815) (Burkholderia phymatum), this protein is Aspartate--tRNA(Asp/Asn) ligase.